A 260-amino-acid chain; its full sequence is Troponin I 3 (260 aa).

Residues Asp192–Glu219 are compositionally biased toward basic and acidic residues. The tract at residues Asp192–Glu260 is disordered. The segment covering Pro231–Glu260 has biased composition (acidic residues).

This sequence belongs to the troponin I family. As to expression, expressed in body wall muscle from first larval stage to adult. In adults expression is predominantly in vulval and anal muscles, body wall muscle expression is weaker. Also expressed in vulval muscles of hermaphrodites and the sex muscles of males.

Troponin I is the inhibitory subunit of troponin, the thin filament regulatory complex which confers calcium-sensitivity to muscle actomyosin ATPase activity. The polypeptide is Troponin I 3 (tni-3) (Caenorhabditis elegans).